The following is a 262-amino-acid chain: Small ribosomal subunit protein uS2 (262 aa).

It belongs to the universal ribosomal protein uS2 family.

This chain is Small ribosomal subunit protein uS2, found in Rhodospirillum rubrum (strain ATCC 11170 / ATH 1.1.1 / DSM 467 / LMG 4362 / NCIMB 8255 / S1).